The chain runs to 116 residues: CDKN2AIP N-terminal-like protein (116 aa).

The residue at position 1 (methionine 1) is an N-acetylmethionine. The XRN2-binding (XTBD) domain occupies 24–116 (AEQFRSYSES…RSELMKKHQS (93 aa)).

Belongs to the CARF family. Interacts with XRN2; the interaction is direct.

In Rattus norvegicus (Rat), this protein is CDKN2AIP N-terminal-like protein (Cdkn2aipnl).